A 247-amino-acid polypeptide reads, in one-letter code: DNA-directed RNA polymerase subunit Rpo3 (247 aa).

The protein belongs to the archaeal Rpo3/eukaryotic RPB3 RNA polymerase subunit family. Part of the RNA polymerase complex.

The protein localises to the cytoplasm. The enzyme catalyses RNA(n) + a ribonucleoside 5'-triphosphate = RNA(n+1) + diphosphate. In terms of biological role, DNA-dependent RNA polymerase (RNAP) catalyzes the transcription of DNA into RNA using the four ribonucleoside triphosphates as substrates. The chain is DNA-directed RNA polymerase subunit Rpo3 from Natronomonas pharaonis (strain ATCC 35678 / DSM 2160 / CIP 103997 / JCM 8858 / NBRC 14720 / NCIMB 2260 / Gabara) (Halobacterium pharaonis).